A 158-amino-acid chain; its full sequence is Small ribosomal subunit protein uS7 (158 aa).

It belongs to the universal ribosomal protein uS7 family. In terms of assembly, part of the 30S ribosomal subunit. Contacts proteins S9 and S11.

Functionally, one of the primary rRNA binding proteins, it binds directly to 16S rRNA where it nucleates assembly of the head domain of the 30S subunit. Is located at the subunit interface close to the decoding center, probably blocks exit of the E-site tRNA. In Gluconacetobacter diazotrophicus (strain ATCC 49037 / DSM 5601 / CCUG 37298 / CIP 103539 / LMG 7603 / PAl5), this protein is Small ribosomal subunit protein uS7.